Here is a 152-residue protein sequence, read N- to C-terminus: uncharacterized protein (152 aa).

A run of 4 helical transmembrane segments spans residues 2-22, 26-46, 92-112, and 128-148; these read ENLIVAISNFPAVLPIGLSFL, FITFGTITFVSIASFISHLIE, VVPIVNNKWLFAMTIPVFILL, and YIITHCMWHAGIFGLMYYFLK.

The protein resides in the membrane. This is an uncharacterized protein from Acanthamoeba polyphaga mimivirus (APMV).